A 462-amino-acid chain; its full sequence is Violaxanthin de-epoxidase, chloroplastic (462 aa).

Cysteines 231 and 362 form a disulfide. Residues 372 to 437 (IEKTVEEGER…RELSKEEMEF (66 aa)) are a coiled coil. The segment at 380–391 (ERIIVKEVEEIE) is involved in the binding to the thylakoid membrane.

Belongs to the calycin superfamily. Lipocalin family. Interacts in vitro with LTO1.

The protein localises to the plastid. It is found in the chloroplast thylakoid membrane. It catalyses the reaction all-trans-violaxanthin + 2 L-ascorbate = all-trans-zeaxanthin + 2 L-dehydroascorbate + 2 H2O. With respect to regulation, activity limited by low ascorbate availability. Feedback inhibition by zeaxanthin. Requires the presence of micelle-forming lipids such as monogalactosyldiacylglyceride (MGDG). Low concentration of bilayer forming lipids, such as digalactosyldiacylglyceride (DGDG) or phosphatidylcholine, supports a slower but nearly complete activity. 80% of the specific activity in lumenal chloroplast fractions is lost in vitro in the presence of reduced thioredoxin. Its function is as follows. Part of the xanthophyll (or violaxanthin) cycle for controlling the concentration of zeaxanthin in chloroplasts. Catalyzes the two-step mono de-epoxidation reaction. Stereospecific for all-trans xanthophylls. Zeaxanthin induces the dissipation of excitation energy in the chlorophyll of the light-harvesting protein complex of photosystem II. The chain is Violaxanthin de-epoxidase, chloroplastic from Arabidopsis thaliana (Mouse-ear cress).